Here is a 291-residue protein sequence, read N- to C-terminus: Phosphatidylglycerol--prolipoprotein diacylglyceryl transferase (291 aa).

7 helical membrane-spanning segments follow: residues 21 to 41 (VALHWYGLMYLVGFVFAMWLA), 60 to 80 (LLYAGFLGVFLGGRIGYVLFY), 96 to 116 (WDGGMSFHGGLIGVILVMIIF), 130 to 150 (FIAPLIPFGLGAGRLGNFING), 198 to 218 (SQLYELALEGVVLFIILNLFI), 225 to 245 (GAVSGLFLIGYGALRIIVEFF), and 260 to 280 (ISMGQILSIPMIIAGAIMMVW). R143 is a binding site for a 1,2-diacyl-sn-glycero-3-phospho-(1'-sn-glycerol).

This sequence belongs to the Lgt family.

The protein localises to the cell inner membrane. It carries out the reaction L-cysteinyl-[prolipoprotein] + a 1,2-diacyl-sn-glycero-3-phospho-(1'-sn-glycerol) = an S-1,2-diacyl-sn-glyceryl-L-cysteinyl-[prolipoprotein] + sn-glycerol 1-phosphate + H(+). Its pathway is protein modification; lipoprotein biosynthesis (diacylglyceryl transfer). Its function is as follows. Catalyzes the transfer of the diacylglyceryl group from phosphatidylglycerol to the sulfhydryl group of the N-terminal cysteine of a prolipoprotein, the first step in the formation of mature lipoproteins. This Salmonella choleraesuis (strain SC-B67) protein is Phosphatidylglycerol--prolipoprotein diacylglyceryl transferase.